The primary structure comprises 240 residues: Uridylate kinase (240 aa).

Residue 13 to 16 coordinates ATP; it reads KFSG. Residue Gly-55 coordinates UMP. ATP-binding residues include Gly-56 and Arg-60. UMP is bound by residues Asp-76 and 137 to 144; that span reads TGNPFFTT. 3 residues coordinate ATP: Thr-164, Tyr-170, and Asp-173.

It belongs to the UMP kinase family. As to quaternary structure, homohexamer.

It localises to the cytoplasm. The enzyme catalyses UMP + ATP = UDP + ADP. It functions in the pathway pyrimidine metabolism; CTP biosynthesis via de novo pathway; UDP from UMP (UMPK route): step 1/1. With respect to regulation, inhibited by UTP. Its function is as follows. Catalyzes the reversible phosphorylation of UMP to UDP. This Helicobacter pylori (strain J99 / ATCC 700824) (Campylobacter pylori J99) protein is Uridylate kinase.